A 329-amino-acid polypeptide reads, in one-letter code: Beta-tectorin (329 aa).

Residues Met1 to Ala17 form the signal peptide. The 265-residue stretch at Ser19–Arg283 folds into the ZP domain. N-linked (GlcNAc...) asparagine glycosylation is found at Asn80, Asn104, Asn116, and Asn145. Cys204 and Cys264 form a disulfide bridge. Gly305 is lipidated: GPI-anchor amidated glycine. A propeptide spans Phe306–Leu329 (removed in mature form).

As to quaternary structure, may form homomeric filament after self-association or heteromeric filament after association with alpha-tectorin. Interacts with CEACAM16. In terms of processing, the presence of a hydrophobic C-terminus preceded by a potential cleavage site strongly suggests that tectorins are synthesized as glycosylphosphatidylinositol-linked, membrane-bound precursors. Tectorins are targeted to the apical surface of the inner ear epithelia by the lipid and proteolytically released into the extracellular compartment.

Its subcellular location is the cell membrane. The protein localises to the secreted. The protein resides in the extracellular space. It localises to the extracellular matrix. One of the major non-collagenous components of the tectorial membrane. The tectorial membrane is an extracellular matrix of the inner ear that covers the neuroepithelium of the cochlea and contacts the stereocilia bundles of specialized sensory hair cells. Sound induces movement of these hair cells relative to the tectorial membrane, deflects the stereocilia and leads to fluctuations in hair-cell membrane potential, transducing sound into electrical signals. This chain is Beta-tectorin (TECTB), found in Homo sapiens (Human).